A 711-amino-acid polypeptide reads, in one-letter code: Far upstream element-binding protein 2 (711 aa).

A disordered region spans residues 1 to 147 (MSDYSTGGPP…HPPPRTSMTE (147 aa)). An N-acetylserine modification is found at serine 2. A compositionally biased stretch (pro residues) spans 8-17 (GPPPGPPPPA). 2 stretches are compositionally biased toward gly residues: residues 18–28 (GGGGGAGGAGG) and 36–68 (GAGDRGGGGPGGGGPGGGSAGGPSQPPGGGGPG). Arginine 40 is subject to Omega-N-methylarginine. At lysine 87 the chain carries N6-acetyllysine. Serine 99 carries the post-translational modification Phosphoserine. Position 100 is a phosphothreonine (threonine 100). Over residues 110 to 122 (RQLEDGDQPESKK) the composition is skewed to basic and acidic residues. Residue lysine 121 forms a Glycyl lysine isopeptide (Lys-Gly) (interchain with G-Cter in SUMO1); alternate linkage. Lysine 121 is covalently cross-linked (Glycyl lysine isopeptide (Lys-Gly) (interchain with G-Cter in SUMO2); alternate). Residues serine 125, serine 129, serine 131, serine 181, serine 184, serine 193, and serine 274 each carry the phosphoserine modification. KH domains are found at residues 144-208 (SMTE…KMML), 233-299 (GTVQ…CEMV), and 322-386 (GGGI…ARII). A disordered region spans residues 392–429 (SLRSGPPGPPGGPGMPPGGRGRGRGQGNWGPPGGEMTF). Over residues 397–407 (PPGPPGGPGMP) the composition is skewed to pro residues. The segment covering 408 to 424 (PGGRGRGRGQGNWGPPG) has biased composition (gly residues). 4 positions are modified to omega-N-methylarginine: arginine 411, arginine 413, arginine 415, and arginine 442. One can recognise a KH 4 domain in the interval 424–491 (GGEMTFSIPT…QQIDHAKQLI (68 aa)). Serine 480 is modified (phosphoserine). Residues 497-569 (GPLCPVGPGP…HDPSKAAAAA (73 aa)) are disordered. Pro residues-rich tracts occupy residues 501-520 (PVGPGPGGPGPAGPMGPFNP) and 528-542 (PGAPPHAGGPPPHQY). The stretch at 571–582 (DPNAAWAAYYSH) is repeat 1. Positions 571–684 (DPNAAWAAYY…SAAWAEYYRQ (114 aa)) are 4 X 12 AA imperfect repeats. Residues 583 to 711 (YYQQPPGPVP…PTQQGQQQAQ (129 aa)) are disordered. The segment covering 587-613 (PPGPVPGPAPAPAAPPAQGEPPQPPPT) has biased composition (pro residues). A run of 3 repeats spans residues 617-628 (DYTKAWEEYYKK), 643-654 (DYTKAWEEYYKK), and 673-684 (DYSAAWAEYYRQ).

Belongs to the KHSRP family. As to quaternary structure, part of a ternary complex containing FUBP2, PTBP1, PTBP2 and HNRPH1. Interacts with PARN. Interacts with PQBP1. In terms of processing, phosphorylation at Ser-193 leads to the unfolding of the unstable KH domain 1, creating a site for 14-3-3 YWHAZ binding, which promotes nuclear localization and impairs the RNA degradation function. In terms of tissue distribution, detected in neural and non-neural cell lines.

It is found in the nucleus. It localises to the cytoplasm. In terms of biological role, binds to the dendritic targeting element and may play a role in mRNA trafficking. Part of a ternary complex that binds to the downstream control sequence (DCS) of the pre-mRNA. Mediates exon inclusion in transcripts that are subject to tissue-specific alternative splicing. May interact with single-stranded DNA from the far-upstream element (FUSE). May activate gene expression. Also involved in degradation of inherently unstable mRNAs that contain AU-rich elements (AREs) in their 3'-UTR, possibly by recruiting degradation machinery to ARE-containing mRNAs. The sequence is that of Far upstream element-binding protein 2 (KHSRP) from Homo sapiens (Human).